Here is an 88-residue protein sequence, read N- to C-terminus: Enticin (88 aa).

The N-terminal stretch at 1-19 (MKTALPLLLLTCLVAAVQS) is a signal peptide. 3 disulfides stabilise this stretch: Cys25–Cys33, Cys40–Cys52, and Cys59–Cys67. Positions 69–88 (REQSQLNHDHLNNHTTTQQP) are excised as a propeptide.

As to quaternary structure, binds to attractin and temptin.

Its subcellular location is the secreted. A component of the complex of water-borne protein pheromones that stimulates attraction and mating behavior. This Aplysia californica (California sea hare) protein is Enticin.